The following is a 969-amino-acid chain: Proprotein convertase subtilisin/kexin type 6 (969 aa).

Over residues 1-16 (MPPRAPPAPGPRPPPR) the composition is skewed to pro residues. The interval 1–39 (MPPRAPPAPGPRPPPRAAAATDTAAGAGGAGGAGGAGGP) is disordered. A signal peptide spans 1-63 (MPPRAPPAPG…LLALPAACSA (63 aa)). The span at 26–39 (GAGGAGGAGGAGGP) shows a compositional bias: gly residues. A propeptide spanning residues 64 to 149 (PPPRPVYTNH…QQEVKRRVKR (86 aa)) is cleaved from the precursor. Residues 168 to 487 (MWYLHCGDKN…FGLVDAEALV (320 aa)) form the Peptidase S8 domain. Active-site charge relay system residues include aspartate 205 and histidine 246. Asparagine 259 is a glycosylation site (N-linked (GlcNAc...) asparagine). Serine 420 acts as the Charge relay system in catalysis. Residues 495-635 (AVPSQHMCVA…SLILYGTAEH (141 aa)) form the P/Homo B domain. The Cell attachment site signature appears at 553–555 (RGD). The disordered stretch occupies residues 658–683 (EPPKAALSPSQVEVPEDEEDYTAQST). 5 FU repeats span residues 692-739 (TSVC…GYFG), 743-790 (ARRC…GFYA), 794-838 (QKNC…GTYF), 842-887 (LIRC…GFYP), and 895-943 (HKVC…ETFC). The segment at 695–930 (CHPECGDKGC…GFTQLGTSCI (236 aa)) is CRM (Cys-rich motif). Asparagine 914 and asparagine 932 each carry an N-linked (GlcNAc...) asparagine glycan. Residues 931-969 (TNHTCSNADETFCEMVKSNRLCERKLFIQFCCRTCLLAG) form the PLAC domain.

This sequence belongs to the peptidase S8 family. In terms of assembly, the PACE4A-I precursor protein seems to exist in the reticulum endoplasmic as both a monomer and a dimer-sized complex whereas mature PACE4A-I exists only as a monomer, suggesting that propeptide cleavage affects its tertiary or quaternary structure. Interacts (immature form including the propeptide) with RCN3; probably involved in the maturation and the secretion of PCSK6. Ca(2+) serves as cofactor. Each PACE4 isoform exhibits a unique restricted distribution. Isoform PACE4A-I is expressed in heart, brain, placenta, lung, skeletal muscle, kidney, pancreas, but at comparatively higher levels in the liver. Isoform PACE4A-II is at least expressed in placenta. Isoform PACE4B was only found in the embryonic kidney cell line from which it was isolated. Isoform PACE4C and isoform PACE4D are expressed in placenta. Isoform PACE4E-I is expressed in cerebellum, placenta and pituitary. Isoform PACE4E-II is at least present in cerebellum.

It localises to the secreted. Its subcellular location is the endoplasmic reticulum. The protein resides in the endomembrane system. In terms of biological role, serine endoprotease that processes various proproteins by cleavage at paired basic amino acids, recognizing the RXXX[KR]R consensus motif. Likely functions in the constitutive secretory pathway, with unique restricted distribution in both neuroendocrine and non-neuroendocrine tissues. In Homo sapiens (Human), this protein is Proprotein convertase subtilisin/kexin type 6 (PCSK6).